A 284-amino-acid chain; its full sequence is Serine/threonine-protein phosphatase Pgam5, mitochondrial (284 aa).

The helical transmembrane segment at Leu8 to Asp24 threads the bilayer.

The protein belongs to the phosphoglycerate mutase family. BPG-dependent PGAM subfamily. In terms of assembly, interacts with skn-1 isoforms a and c.

Its subcellular location is the mitochondrion outer membrane. It catalyses the reaction O-phospho-L-seryl-[protein] + H2O = L-seryl-[protein] + phosphate. The catalysed reaction is O-phospho-L-threonyl-[protein] + H2O = L-threonyl-[protein] + phosphate. Displays phosphatase activity for serine/threonine residues. Has apparently no phosphoglycerate mutase activity. This Caenorhabditis elegans protein is Serine/threonine-protein phosphatase Pgam5, mitochondrial (pgam-5).